Consider the following 300-residue polypeptide: Formamidopyrimidine-DNA glycosylase (300 aa).

The active-site Schiff-base intermediate with DNA is the P2. The active-site Proton donor is E3. K60 serves as the catalytic Proton donor; for beta-elimination activity. The DNA site is built by H108, R136, and R181. The segment at 266 to 300 (WVYSRAGQPCRICNTPLEKIKLAGRSTHFCPQCQK) adopts an FPG-type zinc-finger fold. Residue R290 is the Proton donor; for delta-elimination activity of the active site.

It belongs to the FPG family. In terms of assembly, monomer. The cofactor is Zn(2+).

The catalysed reaction is Hydrolysis of DNA containing ring-opened 7-methylguanine residues, releasing 2,6-diamino-4-hydroxy-5-(N-methyl)formamidopyrimidine.. It catalyses the reaction 2'-deoxyribonucleotide-(2'-deoxyribose 5'-phosphate)-2'-deoxyribonucleotide-DNA = a 3'-end 2'-deoxyribonucleotide-(2,3-dehydro-2,3-deoxyribose 5'-phosphate)-DNA + a 5'-end 5'-phospho-2'-deoxyribonucleoside-DNA + H(+). In terms of biological role, involved in base excision repair of DNA damaged by oxidation or by mutagenic agents. Acts as a DNA glycosylase that recognizes and removes damaged bases. Has a preference for oxidized purines, such as 7,8-dihydro-8-oxoguanine (8-oxoG). Has AP (apurinic/apyrimidinic) lyase activity and introduces nicks in the DNA strand. Cleaves the DNA backbone by beta-delta elimination to generate a single-strand break at the site of the removed base with both 3'- and 5'-phosphates. The protein is Formamidopyrimidine-DNA glycosylase of Trichodesmium erythraeum (strain IMS101).